Reading from the N-terminus, the 123-residue chain is Large ribosomal subunit protein uL14 (123 aa).

The protein belongs to the universal ribosomal protein uL14 family. In terms of assembly, part of the 50S ribosomal subunit. Forms a cluster with proteins L3 and L19. In the 70S ribosome, L14 and L19 interact and together make contacts with the 16S rRNA in bridges B5 and B8.

Functionally, binds to 23S rRNA. Forms part of two intersubunit bridges in the 70S ribosome. This Erwinia tasmaniensis (strain DSM 17950 / CFBP 7177 / CIP 109463 / NCPPB 4357 / Et1/99) protein is Large ribosomal subunit protein uL14.